The sequence spans 132 residues: Probable histone H2A.2 (132 aa).

It belongs to the histone H2A family. In terms of assembly, the nucleosome is a histone octamer containing two molecules each of H2A, H2B, H3 and H4 assembled in one H3-H4 heterotetramer and two H2A-H2B heterodimers. The octamer wraps approximately 147 bp of DNA. Post-translationally, not ubiquitinated. As to expression, expressed mainly in non-dividing tissues of the plant. Also found in meristems and dividing cells.

Its subcellular location is the nucleus. The protein localises to the chromosome. Functionally, core component of nucleosome. Nucleosomes wrap and compact DNA into chromatin, limiting DNA accessibility to the cellular machineries which require DNA as a template. Histones thereby play a central role in transcription regulation, DNA repair, DNA replication and chromosomal stability. DNA accessibility is regulated via a complex set of post-translational modifications of histones, also called histone code, and nucleosome remodeling. The protein is Probable histone H2A.2 of Arabidopsis thaliana (Mouse-ear cress).